A 420-amino-acid chain; its full sequence is MTLNEKKSINECDLKGKKTLVRVDFNVPVKGGVITNDYRIRSALPTIQKVLNEGGSCILMSHLGRPKGISISEAAAVRSAGKVPGYEEAATLRPVAQRLGELLSKPVVFAPDCLDAADVVKKMSPGDVVLLENVRFYREEGSKKEEEREAMAKVLASYGDIFVSDAFGTAHRDSATMTGIPKVLGHGAAGYLMEKEISYFSKVLGNPPRPLVAIVGGSKVSDKIQLLDNMLQRIDYLLIGGAMAYTFLKAQGHRIGTSMCEEDRLDLARSLLKKAEDRKVQVLLPVDHVCHTEFKAVDTPVVTADADIPDGHMALDIGPKTIANYVETIGKCKSAIWNGPMGVFEMTPYSKGTFAVAKAMGDCTQKNGLMSIIGGGDSASAAEQSGEATRMSHVSTGGGASLELLEGKTLPGVAILDEKV.

Positions 23, 24, 25, 26, 39, 61, 62, 64, 65, 135, 171, and 172 each coordinate (2R)-3-phosphoglycerate. Gly-217 is an ADP binding site. Gly-217 contacts CDP. Lys-219 provides a ligand contact to (2R)-3-phosphoglycerate. An AMP-binding site is contributed by Lys-219. Asp-222 contributes to the CDP binding site. Residue Asp-222 coordinates Mg(2+). ADP is bound by residues Lys-223 and Gly-241. Lys-223 contributes to the AMP binding site. Position 223 (Lys-223) interacts with ATP. Residue Gly-241 participates in CDP binding. Residues Ala-242 and Ala-314 each coordinate AMP. ATP-binding residues include Ala-242 and Ala-314. The ADP site is built by Ala-314 and Asn-338. Positions 339 and 344 each coordinate CDP. The ADP site is built by Phe-344, Glu-345, Asp-377, and Ser-378. An AMP-binding site is contributed by Glu-345. ATP contacts are provided by Glu-345, Asp-377, and Ser-378. Asp-377 is a Mg(2+) binding site.

This sequence belongs to the phosphoglycerate kinase family. Monomer. Mg(2+) serves as cofactor.

The protein localises to the cytoplasm. The enzyme catalyses (2R)-3-phosphoglycerate + ATP = (2R)-3-phospho-glyceroyl phosphate + ADP. It functions in the pathway carbohydrate degradation; glycolysis; pyruvate from D-glyceraldehyde 3-phosphate: step 2/5. The sequence is that of Phosphoglycerate kinase, cytosolic (C1PGK) from Trypanosoma congolense.